Consider the following 322-residue polypeptide: Ferrochelatase (322 aa).

The Fe cation site is built by His-195 and Glu-276.

This sequence belongs to the ferrochelatase family.

The protein resides in the cytoplasm. The enzyme catalyses heme b + 2 H(+) = protoporphyrin IX + Fe(2+). The protein operates within porphyrin-containing compound metabolism; protoheme biosynthesis; protoheme from protoporphyrin-IX: step 1/1. In terms of biological role, catalyzes the ferrous insertion into protoporphyrin IX. The sequence is that of Ferrochelatase from Edwardsiella ictaluri (strain 93-146).